The following is a 220-amino-acid chain: Elongation factor Ts, chloroplastic (220 aa).

This sequence belongs to the EF-Ts family.

It localises to the plastid. The protein resides in the chloroplast. Functionally, associates with the EF-Tu.GDP complex and induces the exchange of GDP to GTP. It remains bound to the aminoacyl-tRNA.EF-Tu.GTP complex up to the GTP hydrolysis stage on the ribosome. The chain is Elongation factor Ts, chloroplastic (tsf) from Pyropia yezoensis (Susabi-nori).